The primary structure comprises 238 residues: Lactate utilization protein A (238 aa).

This sequence belongs to the LutA/YkgE family.

Its function is as follows. Is involved in L-lactate degradation and allows cells to grow with lactate as the sole carbon source. This is Lactate utilization protein A from Bacillus pumilus (strain SAFR-032).